The primary structure comprises 179 residues: Transcription factor 21 (179 aa).

Residues 20–87 (CDGLKMDSNK…QVQRNAANAR (68 aa)) are disordered. The span at 33 to 46 (TSNESTEESSNCEN) shows a compositional bias: low complexity. The span at 70–80 (SGVSQEGKQVQ) shows a compositional bias: polar residues. A bHLH domain is found at 79–131 (VQRNAANARERARMRVLSKAFSRLKTTLPWVPPDTKLSKLDTLRLASSYIAHL).

As to quaternary structure, efficient DNA binding requires dimerization with another bHLH protein. Forms a heterodimer with TCF3 and binds the E box (5'-CANNTG-3').

It is found in the nucleus. Its function is as follows. Involved in epithelial-mesenchymal interactions in kidney and lung morphogenesis that include epithelial differentiation and branching morphogenesis. May play a role in the specification or differentiation of one or more subsets of epicardial cell types. This Homo sapiens (Human) protein is Transcription factor 21 (TCF21).